The primary structure comprises 295 residues: Maintenance of mitochondrial morphology protein 1 (295 aa).

At methionine 1 to glycine 12 the chain is on the lumenal side. The chain crosses the membrane as a helical span at residues phenylalanine 13–phenylalanine 33. Residues cysteine 34–glutamate 295 lie on the Cytoplasmic side of the membrane. The SMP-LTD domain occupies glutamate 81–proline 278.

Belongs to the MMM1 family. In terms of assembly, homodimer. Component of the ER-mitochondria encounter structure (ERMES) or MDM complex, composed of mmm1, mdm10, mdm12 and mdm34. A mmm1 homodimer associates with one molecule of mdm12 on each side in a pairwise head-to-tail manner, and the SMP-LTD domains of mmm1 and mdm12 generate a continuous hydrophobic tunnel for phospholipid trafficking.

The protein resides in the endoplasmic reticulum membrane. Component of the ERMES/MDM complex, which serves as a molecular tether to connect the endoplasmic reticulum (ER) and mitochondria. Components of this complex are involved in the control of mitochondrial shape and protein biogenesis, and function in nonvesicular lipid trafficking between the ER and mitochondria. The mdm12-mmm1 subcomplex functions in the major beta-barrel assembly pathway that is responsible for biogenesis of all outer membrane beta-barrel proteins, and acts in a late step after the SAM complex. The mdm10-mdm12-mmm1 subcomplex further acts in the TOM40-specific pathway after the action of the mdm12-mmm1 complex. Essential for establishing and maintaining the structure of mitochondria and maintenance of mtDNA nucleoids. The protein is Maintenance of mitochondrial morphology protein 1 of Schizosaccharomyces japonicus (strain yFS275 / FY16936) (Fission yeast).